We begin with the raw amino-acid sequence, 371 residues long: Cytochrome b (371 aa).

The next 4 helical transmembrane spans lie at 25–45, 69–90, 105–125, and 170–190; these read FGSM…FLAV, WMMQ…YIHI, WMSG…GYVL, and FFAL…LHVI. Heme b contacts are provided by histidine 75 and histidine 89. Heme b-binding residues include histidine 174 and histidine 188. Histidine 193 contacts a ubiquinone. The next 4 helical transmembrane spans lie at 218-238, 280-300, 312-332, and 339-358; these read YKDF…VSFF, LGGA…PFTH, LYQL…WAAT, and FITI…ISIP.

Belongs to the cytochrome b family. The cytochrome bc1 complex contains 3 respiratory subunits (MT-CYB, CYC1 and UQCRFS1), 2 core proteins (UQCRC1 and UQCRC2) and probably 6 low-molecular weight proteins. Heme b serves as cofactor.

It is found in the mitochondrion inner membrane. Component of the ubiquinol-cytochrome c reductase complex (complex III or cytochrome b-c1 complex) that is part of the mitochondrial respiratory chain. The b-c1 complex mediates electron transfer from ubiquinol to cytochrome c. Contributes to the generation of a proton gradient across the mitochondrial membrane that is then used for ATP synthesis. This Malayopython reticulatus (Reticulate python) protein is Cytochrome b (MT-CYB).